The sequence spans 389 residues: Chalcone synthase H2 (389 aa).

Cysteine 164 is a catalytic residue.

The protein belongs to the thiolase-like superfamily. Chalcone/stilbene synthases family.

It localises to the cytoplasm. The catalysed reaction is (E)-4-coumaroyl-CoA + 3 malonyl-CoA + 3 H(+) = 2',4,4',6'-tetrahydroxychalcone + 3 CO2 + 4 CoA. It participates in secondary metabolite biosynthesis; flavonoid biosynthesis. Its function is as follows. Involved in the biosynthesis of prenylated phenolics natural products which contribute to the bitter taste of beer and display broad biological activities. Chalcone synthase that can use 4-coumaroyl-CoA to produce 4,2',4',6'-tetrahydroxychalcone (also termed naringenin-chalcone or chalcone) which can, under specific conditions, spontaneously isomerize into naringenin. The chain is Chalcone synthase H2 from Humulus lupulus (European hop).